Reading from the N-terminus, the 312-residue chain is MMEPREAGQHVGAANGAQEDVAFNLIILSLTEGLGLGGLLGNGAVLWLLSSNVYRNPFAIYLLDVACADLIFLGCHMVAIVPDLLQGRLDFPGFVQTSLATLRFFCYIVGLSLLAAVSVEQCLAALFPAWYSCRRPRHLTTCVCALTWALCLLLHLLLSGACTQFFGEPSRHLCRTLWLVAAVLLALLCCTMCGASLMLLLRVERGPQRPPPRGFPGLILLTVLLFLFCGLPFGIYWLSRNLLWYIPHYFYHFSFLMAAVHCAAKPVVYFCLGSAQGRRLPLRLVLQRALGDEAELGAVRETSRRGLVDIAA.

At 1-20 (MMEPREAGQHVGAANGAQED) the chain is on the extracellular side. A helical membrane pass occupies residues 21 to 41 (VAFNLIILSLTEGLGLGGLLG). At 42–59 (NGAVLWLLSSNVYRNPFA) the chain is on the cytoplasmic side. The chain crosses the membrane as a helical span at residues 60–80 (IYLLDVACADLIFLGCHMVAI). Residues 81 to 106 (VPDLLQGRLDFPGFVQTSLATLRFFC) lie on the Extracellular side of the membrane. Residues 107–127 (YIVGLSLLAAVSVEQCLAALF) form a helical membrane-spanning segment. Topologically, residues 128–141 (PAWYSCRRPRHLTT) are cytoplasmic. The helical transmembrane segment at 142-162 (CVCALTWALCLLLHLLLSGAC) threads the bilayer. Residues 163–176 (TQFFGEPSRHLCRT) lie on the Extracellular side of the membrane. The chain crosses the membrane as a helical span at residues 177 to 197 (LWLVAAVLLALLCCTMCGASL). At 198-217 (MLLLRVERGPQRPPPRGFPG) the chain is on the cytoplasmic side. A helical membrane pass occupies residues 218-238 (LILLTVLLFLFCGLPFGIYWL). Residues 239–241 (SRN) lie on the Extracellular side of the membrane. A helical membrane pass occupies residues 242–262 (LLWYIPHYFYHFSFLMAAVHC). The Cytoplasmic portion of the chain corresponds to 263–312 (AAKPVVYFCLGSAQGRRLPLRLVLQRALGDEAELGAVRETSRRGLVDIAA).

Belongs to the G-protein coupled receptor 1 family. Mas subfamily.

It is found in the cell membrane. Functionally, orphan receptor. May regulate nociceptor function and/or development, including the sensation or modulation of pain. In Homo sapiens (Human), this protein is Mas-related G-protein coupled receptor member E (MRGPRE).